We begin with the raw amino-acid sequence, 437 residues long: Lipopolysaccharide biosynthesis protein RfbH (437 aa).

Belongs to the DegT/DnrJ/EryC1 family. Pyridoxal 5'-phosphate serves as cofactor.

Its pathway is bacterial outer membrane biogenesis; LPS O-antigen biosynthesis. This Salmonella typhimurium (strain LT2 / SGSC1412 / ATCC 700720) protein is Lipopolysaccharide biosynthesis protein RfbH (rfbH).